The sequence spans 122 residues: Immunoglobulin lambda variable 8-61 (122 aa).

Positions 1 to 24 are cleaved as a signal peptide; the sequence is MSVPTMAWMMLLLGLLAYGSGVDS. Positions 25–49 are framework-1; the sequence is QTVVTQEPSFSVSPGGTVTLTCGLS. The Ig-like domain occupies 25 to 122; the sequence is QTVVTQEPSF…YCVLYMGSGI (98 aa). Cys-46 and Cys-114 are disulfide-bonded. The interval 50 to 58 is complementarity-determining-1; it reads SGSVSTSYY. The tract at residues 59–75 is framework-2; that stretch reads PSWYQQTPGQAPRTLIY. The complementarity-determining-2 stretch occupies residues 76-78; it reads STN. A framework-3 region spans residues 79–114; that stretch reads TRSSGVPDRFSGSILGNKAALTITGAQADDESDYYC. Residues 115–122 form a complementarity-determining-3 region; the sequence is VLYMGSGI.

As to quaternary structure, immunoglobulins are composed of two identical heavy chains and two identical light chains; disulfide-linked.

It localises to the secreted. The protein resides in the cell membrane. In terms of biological role, v region of the variable domain of immunoglobulin light chains that participates in the antigen recognition. Immunoglobulins, also known as antibodies, are membrane-bound or secreted glycoproteins produced by B lymphocytes. In the recognition phase of humoral immunity, the membrane-bound immunoglobulins serve as receptors which, upon binding of a specific antigen, trigger the clonal expansion and differentiation of B lymphocytes into immunoglobulins-secreting plasma cells. Secreted immunoglobulins mediate the effector phase of humoral immunity, which results in the elimination of bound antigens. The antigen binding site is formed by the variable domain of one heavy chain, together with that of its associated light chain. Thus, each immunoglobulin has two antigen binding sites with remarkable affinity for a particular antigen. The variable domains are assembled by a process called V-(D)-J rearrangement and can then be subjected to somatic hypermutations which, after exposure to antigen and selection, allow affinity maturation for a particular antigen. The polypeptide is Immunoglobulin lambda variable 8-61 (Homo sapiens (Human)).